Consider the following 1264-residue polypeptide: Phosphatidylinositol 3,4,5-trisphosphate 5-phosphatase 2 (1264 aa).

Residues 26 to 122 form the SH2 domain; the sequence is WYHRDLSRAA…GLVCALLLPV (97 aa). Residues 124–137 are compositionally biased toward basic and acidic residues; it reads REREPDPPDDRDVS. The tract at residues 124 to 182 is disordered; that stretch reads REREPDPPDDRDVSDGEDEKPPLPPRSGSTSISAPVGPGSPPAAPETPTTPAAESAPNG. A Phosphoserine modification is found at serine 137. A compositionally biased stretch (low complexity) spans 169-180; that stretch reads ETPTTPAAESAP. Threonine 170 carries the post-translational modification Phosphothreonine. Residues serine 246 and serine 358 each carry the phosphoserine modification. The residue at position 892 (tyrosine 892) is a Phosphotyrosine. Residue serine 896 is modified to Phosphoserine. A disordered region spans residues 903–1123; that stretch reads GAKSKAPSVS…TFLGEVASGD (221 aa). Residues 944 to 954 show a composition bias toward pro residues; that stretch reads PPPTGRPPAPP. Positions 950 to 955 match the SH3-binding motif; it reads PPAPPR. The span at 957 to 971 shows a compositional bias: basic and acidic residues; sequence ASREEPLTPRLKAEG. Threonine 964 carries the phosphothreonine modification. The NPXY motif motif lies at 989 to 992; sequence NPAY. Tyrosine 992 carries the post-translational modification Phosphotyrosine. 3 stretches are compositionally biased toward pro residues: residues 1002 to 1017, 1054 to 1065, and 1093 to 1110; these read LLPPEPPSPARAPVPP, LPPPDFPPPPLP, and GPPPPKAHPRPPLPPGPS. Position 1137 is a phosphoserine (serine 1137). Residues 1140-1178 form a disordered region; sequence DYAPAGPGRSVLLPGPLELQPPRGLPSDYGRPLSFPPPR. Phosphotyrosine is present on residues tyrosine 1141 and tyrosine 1168. One can recognise an SAM domain in the interval 1210–1264; the sequence is WLRAIGLERYEEGLVHNGWDDLEFLSDITEEDLEEAGVQDPAHKRLLLDTLQLSK. A Phosphoserine modification is found at serine 1263.

It belongs to the inositol 1,4,5-trisphosphate 5-phosphatase family. Interacts with tyrosine phosphorylated form of SHC1. Interacts with EGFR. Upon stimulation by the EGF signaling pathway, it forms a complex with SHC1 and EGFR. Interacts with cytoskeletal protein SORBS3/vinexin, promoting its localization to the periphery of cells. Forms a complex with filamin (FLNA or FLNB), actin, GPIb (GP1BA or GP1BB) that regulates cortical and submembraneous actin. Interacts with c-Met/MET, when c-Met/MET is phosphorylated on 'Tyr-1356'. Interacts with p130Cas/BCAR1. Interacts with CENTD3/ARAP3 via its SAM domain. Interacts with c-Cbl/CBL and CAP/SORBS1. Interacts with activated EPHA2 receptor. Interacts with receptor FCGR2A. Interacts with receptor FCGR2B. Interacts with tyrosine kinase ABL1. Interacts with tyrosine kinase TEC. Interacts with CSF1R. Interacts (via N-terminus) with SH3YL1 (via SH3 domain). Interacts with FCRL6 (tyrosine phosphorylated form). Interacts (via SH2 domain) with tyrosine phosphorylated KLRC1 (via ITIM). Interacts with NEDD9/HEF1. In terms of processing, tyrosine phosphorylated by the members of the SRC family after exposure to a diverse array of extracellular stimuli such as insulin, growth factors such as EGF or PDGF, chemokines, integrin ligands and hypertonic and oxidative stress. May be phosphorylated upon IgG receptor FCGR2B-binding. Phosphorylated at Tyr-992 following cell attachment and spreading. Phosphorylated at Tyr-1168 following EGF signaling pathway stimulation. Phosphorylated at Thr-964 in response to PDGF.

The protein resides in the cytoplasm. Its subcellular location is the cytosol. It is found in the membrane. It localises to the cell projection. The protein localises to the filopodium. The protein resides in the lamellipodium. Its subcellular location is the basal cell membrane. It is found in the nucleus. It localises to the nucleus speckle. The protein localises to the cytoskeleton. The protein resides in the spindle pole. The catalysed reaction is a 1,2-diacyl-sn-glycero-3-phospho-(1D-myo-inositol-3,4,5-trisphosphate) + H2O = a 1,2-diacyl-sn-glycero-3-phospho-(1D-myo-inositol-3,4-bisphosphate) + phosphate. It catalyses the reaction 1,2-dioctanoyl-sn-glycero-3-phospho-(1D-myo-inositol-3,4,5-trisphosphate) + H2O = 1,2-dioctanoyl-sn-glycero-3-phospho-(1D-myo-inositol-3,4-bisphosphate) + phosphate. The enzyme catalyses 1,2-dihexadecanoyl-sn-glycero-3-phospho-(1D-myo-inositol-3,4,5-trisphosphate) + H2O = 1,2-dihexadecanoyl-sn-glycero-3-phospho-(1D-myo-inositol-3,4-bisphosphate) + phosphate. Activated upon translocation to the sites of synthesis of PtdIns(3,4,5)P3 in the membrane. Enzymatic activity is enhanced in the presence of phosphatidylserine. In terms of biological role, phosphatidylinositol (PtdIns) phosphatase that specifically hydrolyzes the 5-phosphate of phosphatidylinositol-3,4,5-trisphosphate (PtdIns(3,4,5)P3) to produce PtdIns(3,4)P2, thereby negatively regulating the PI3K (phosphoinositide 3-kinase) pathways. Required for correct mitotic spindle orientation and therefore progression of mitosis. Plays a central role in regulation of PI3K-dependent insulin signaling, although the precise molecular mechanisms and signaling pathways remain unclear. While overexpression reduces both insulin-stimulated MAP kinase and Akt activation, its absence does not affect insulin signaling or GLUT4 trafficking. Confers resistance to dietary obesity. May act by regulating AKT2, but not AKT1, phosphorylation at the plasma membrane. Part of a signaling pathway that regulates actin cytoskeleton remodeling. Required for the maintenance and dynamic remodeling of actin structures as well as in endocytosis, having a major impact on ligand-induced EGFR internalization and degradation. Participates in regulation of cortical and submembraneous actin by hydrolyzing PtdIns(3,4,5)P3 thereby regulating membrane ruffling. Regulates cell adhesion and cell spreading. Required for HGF-mediated lamellipodium formation, cell scattering and spreading. Acts as a negative regulator of EPHA2 receptor endocytosis by inhibiting via PI3K-dependent Rac1 activation. Acts as a regulator of neuritogenesis by regulating PtdIns(3,4,5)P3 level and is required to form an initial protrusive pattern, and later, maintain proper neurite outgrowth. Acts as a negative regulator of the FC-gamma-RIIA receptor (FCGR2A). Mediates signaling from the FC-gamma-RIIB receptor (FCGR2B), playing a central role in terminating signal transduction from activating immune/hematopoietic cell receptor systems. Involved in EGF signaling pathway. Upon stimulation by EGF, it is recruited by EGFR and dephosphorylates PtdIns(3,4,5)P3. Plays a negative role in regulating the PI3K-PKB pathway, possibly by inhibiting PKB activity. Down-regulates Fc-gamma-R-mediated phagocytosis in macrophages independently of INPP5D/SHIP1. In macrophages, down-regulates NF-kappa-B-dependent gene transcription by regulating macrophage colony-stimulating factor (M-CSF)-induced signaling. Plays a role in the localization of AURKA and NEDD9/HEF1 to the basolateral membrane at interphase in polarized cysts, thereby mediates cell cycle homeostasis, cell polarization and cilia assembly. Additionally promotion of cilia growth is also facilitated by hydrolysis of (PtdIns(3,4,5)P3) to PtdIns(3,4)P2. Promotes formation of apical membrane-initiation sites during the initial stages of lumen formation via Rho family-induced actin filament organization and CTNNB1 localization to cell-cell contacts. May also hydrolyze PtdIns(1,3,4,5)P4, and could thus affect the levels of the higher inositol polyphosphates like InsP6. Involved in endochondral ossification. This Canis lupus familiaris (Dog) protein is Phosphatidylinositol 3,4,5-trisphosphate 5-phosphatase 2.